The following is a 212-amino-acid chain: Large ribosomal subunit protein uL3 (212 aa).

A disordered region spans residues 136-155 (THGNSLSHRSNGSIGQNQTP). Position 153 is an N5-methylglutamine (Gln-153).

Belongs to the universal ribosomal protein uL3 family. As to quaternary structure, part of the 50S ribosomal subunit. Forms a cluster with proteins L14 and L19. Post-translationally, methylated by PrmB.

Its function is as follows. One of the primary rRNA binding proteins, it binds directly near the 3'-end of the 23S rRNA, where it nucleates assembly of the 50S subunit. In Shewanella baltica (strain OS223), this protein is Large ribosomal subunit protein uL3.